Here is a 361-residue protein sequence, read N- to C-terminus: Chorismate synthase (361 aa).

NADP(+) is bound by residues arginine 48 and arginine 54. Residues 125 to 127 (RSS), 238 to 239 (NA), glycine 278, 293 to 297 (KPTSS), and arginine 319 contribute to the FMN site.

This sequence belongs to the chorismate synthase family. In terms of assembly, homotetramer. It depends on FMNH2 as a cofactor.

The enzyme catalyses 5-O-(1-carboxyvinyl)-3-phosphoshikimate = chorismate + phosphate. The protein operates within metabolic intermediate biosynthesis; chorismate biosynthesis; chorismate from D-erythrose 4-phosphate and phosphoenolpyruvate: step 7/7. In terms of biological role, catalyzes the anti-1,4-elimination of the C-3 phosphate and the C-6 proR hydrogen from 5-enolpyruvylshikimate-3-phosphate (EPSP) to yield chorismate, which is the branch point compound that serves as the starting substrate for the three terminal pathways of aromatic amino acid biosynthesis. This reaction introduces a second double bond into the aromatic ring system. This chain is Chorismate synthase, found in Enterobacter sp. (strain 638).